Consider the following 579-residue polypeptide: Glutamine--tRNA ligase (579 aa).

Residues 41–51 carry the 'HIGH' region motif; it reads PEPNGYLHIGH. ATP is bound by residues 42–44 and 48–54; these read EPN and HIGHAKA. Asp74 and Tyr218 together coordinate L-glutamine. ATP is bound by residues Thr237, 285 to 286, and 293 to 295; these read RL and MSK. Positions 292–296 match the 'KMSKS' region motif; sequence VMSKR.

Belongs to the class-I aminoacyl-tRNA synthetase family. Monomer.

It localises to the cytoplasm. It catalyses the reaction tRNA(Gln) + L-glutamine + ATP = L-glutaminyl-tRNA(Gln) + AMP + diphosphate. The sequence is that of Glutamine--tRNA ligase from Xanthomonas oryzae pv. oryzae (strain MAFF 311018).